The following is a 740-amino-acid chain: 1,4-alpha-glucan branching enzyme GlgB (740 aa).

Catalysis depends on D414, which acts as the Nucleophile. E467 (proton donor) is an active-site residue.

Belongs to the glycosyl hydrolase 13 family. GlgB subfamily. Monomer.

It catalyses the reaction Transfers a segment of a (1-&gt;4)-alpha-D-glucan chain to a primary hydroxy group in a similar glucan chain.. The protein operates within glycan biosynthesis; glycogen biosynthesis. Catalyzes the formation of the alpha-1,6-glucosidic linkages in glycogen by scission of a 1,4-alpha-linked oligosaccharide from growing alpha-1,4-glucan chains and the subsequent attachment of the oligosaccharide to the alpha-1,6 position. In Rhodospirillum rubrum (strain ATCC 11170 / ATH 1.1.1 / DSM 467 / LMG 4362 / NCIMB 8255 / S1), this protein is 1,4-alpha-glucan branching enzyme GlgB.